The primary structure comprises 327 residues: Tagatose 1,6-diphosphate aldolase 2 (327 aa).

The protein belongs to the aldolase LacD family.

It catalyses the reaction D-tagatofuranose 1,6-bisphosphate = D-glyceraldehyde 3-phosphate + dihydroxyacetone phosphate. It participates in carbohydrate metabolism; D-tagatose 6-phosphate degradation; D-glyceraldehyde 3-phosphate and glycerone phosphate from D-tagatose 6-phosphate: step 2/2. This is Tagatose 1,6-diphosphate aldolase 2 (lacD2) from Streptococcus pyogenes serotype M1.